The sequence spans 1186 residues: Sericin 1 (1186 aa).

An N-terminal signal peptide occupies residues 1 to 21; it reads MRFVLCCTLIALAALSVKAFG. 2 stretches are compositionally biased toward polar residues: residues 39–48 and 104–115; these read AASSESSYLN and NGGSASAGQSRD. Disordered regions lie at residues 39 to 119, 131 to 494, and 518 to 1157; these read AASS…SSLR, AVAA…EDSS, and GGAT…VNRL. Low complexity predominate over residues 145–155; it reads AQQNAQANWNA. Positions 180–198 are enriched in basic and acidic residues; that stretch reads SDKDITAASKDDSRADSSR. Low complexity predominate over residues 211–224; the sequence is SESAGLSDRSASSS. A compositionally biased stretch (polar residues) spans 256 to 275; sequence YYNSSPDGSYNAGTRDSSIS. Over residues 286–299 the composition is skewed to basic and acidic residues; sequence ADKDQIRAANDRSS. Over residues 300-312 the composition is skewed to low complexity; the sequence is SKQLKQSSAQISS. A compositionally biased stretch (basic and acidic residues) spans 321 to 334; sequence SKDRQYSNDKRSKS. Polar residues-rich tracts occupy residues 356–380, 393–409, and 416–445; these read RQSN…QTSK, AHSS…SSSY, and FSSS…ASRE. Composition is skewed to low complexity over residues 465–491, 518–537, 553–698, 705–1004, 1015–1075, and 1097–1145; these read ASQS…TLSE, GGAT…VSGA, SSSS…YGYS, RVSS…YSSS, SSSN…ASSE, and SSTT…TSSS. Tandem repeats lie at residues 593–630, 631–668, 669–706, 707–744, 745–782, 783–820, 821–858, 859–896, 897–934, 935–972, and 973–1010. Residues 1148–1157 are compositionally biased toward basic residues; the sequence is RSHHSGVNRL.

Produced exclusively in the middle (MSG) section of silk glands.

The protein resides in the secreted. Functionally, provides the silk fibroin thread with a sticky coating. Acts as a cement by sticking silk threads together. This chain is Sericin 1 (ser1), found in Bombyx mori (Silk moth).